A 180-amino-acid polypeptide reads, in one-letter code: UPF0340 protein YwlG (180 aa).

It belongs to the UPF0340 family.

The sequence is that of UPF0340 protein YwlG (ywlG) from Bacillus subtilis (strain 168).